The following is a 448-amino-acid chain: 3-phosphoshikimate 1-carboxyvinyltransferase (448 aa).

3-phosphoshikimate-binding residues include lysine 28, serine 29, and arginine 33. Lysine 28 contributes to the phosphoenolpyruvate binding site. Phosphoenolpyruvate contacts are provided by glycine 100 and arginine 128. 4 residues coordinate 3-phosphoshikimate: serine 173, glutamine 175, aspartate 326, and lysine 353. Position 175 (glutamine 175) interacts with phosphoenolpyruvate. The active-site Proton acceptor is the aspartate 326. Phosphoenolpyruvate contacts are provided by arginine 357 and arginine 405.

Belongs to the EPSP synthase family. Monomer.

It localises to the cytoplasm. The catalysed reaction is 3-phosphoshikimate + phosphoenolpyruvate = 5-O-(1-carboxyvinyl)-3-phosphoshikimate + phosphate. It participates in metabolic intermediate biosynthesis; chorismate biosynthesis; chorismate from D-erythrose 4-phosphate and phosphoenolpyruvate: step 6/7. Functionally, catalyzes the transfer of the enolpyruvyl moiety of phosphoenolpyruvate (PEP) to the 5-hydroxyl of shikimate-3-phosphate (S3P) to produce enolpyruvyl shikimate-3-phosphate and inorganic phosphate. This is 3-phosphoshikimate 1-carboxyvinyltransferase from Sinorhizobium fredii (strain NBRC 101917 / NGR234).